The chain runs to 682 residues: Potassium-transporting ATPase ATP-binding subunit (682 aa).

Transmembrane regions (helical) follow at residues 34-54, 58-78, 219-239, and 254-274; these read PVMFVVWASSVLTTLLTLAMV, IAGSALFTGVISLWLWFTVLF, IALTILLIALTIVFLLATATL, and VLVALLVCLIPTTIGGLLSAI. The 4-aspartylphosphate intermediate role is filled by Asp307. ATP-binding positions include Asp344, Glu348, 377–384, and Lys395; that span reads FTAQSRMS. Asp518 and Asp522 together coordinate Mg(2+). Transmembrane regions (helical) follow at residues 588–608, 616–636, and 662–682; these read FAIIPAAFAATYPQLNALNVM, AILSAVIFNALIIIFLIPLAL, and LVVPFIGIKVIDVLLTLLGLA.

This sequence belongs to the cation transport ATPase (P-type) (TC 3.A.3) family. Type IA subfamily. As to quaternary structure, the system is composed of three essential subunits: KdpA, KdpB and KdpC.

It localises to the cell inner membrane. It catalyses the reaction K(+)(out) + ATP + H2O = K(+)(in) + ADP + phosphate + H(+). Functionally, part of the high-affinity ATP-driven potassium transport (or Kdp) system, which catalyzes the hydrolysis of ATP coupled with the electrogenic transport of potassium into the cytoplasm. This subunit is responsible for energy coupling to the transport system and for the release of the potassium ions to the cytoplasm. The polypeptide is Potassium-transporting ATPase ATP-binding subunit (Salmonella choleraesuis (strain SC-B67)).